We begin with the raw amino-acid sequence, 196 residues long: MASVLNEQSLQQLFISARTHHTWKNTPVSDEQLKQIYDLFKYAPTSVNCSPARIVFVKSAAEKERLLQCVNPGNVEKTKNAPVTAIIGMDLDFYEQLPKLFPHVDAKSWFVGKDTFIEQTAFRNSSLQGAYLILAARAIGLDCGPMSGFDADKVNAAFFPDGRVKVNFLVNIGYGDESSLMPRQPRPSFDEACRIL.

Belongs to the nitroreductase family. HadB/RutE subfamily. It depends on FMN as a cofactor.

The sequence is that of Putative NADH dehydrogenase/NAD(P)H nitroreductase Pnuc_0932 from Polynucleobacter asymbioticus (strain DSM 18221 / CIP 109841 / QLW-P1DMWA-1) (Polynucleobacter necessarius subsp. asymbioticus).